We begin with the raw amino-acid sequence, 484 residues long: Serine/arginine-rich splicing factor 11 (484 aa).

The disordered stretch occupies residues 1 to 33 (MSNTTVVPSTAGPGPSGGPGGGGGGGGGGGGTE). Position 2 is an N-acetylserine (Ser-2). Residues 14–32 (GPSGGPGGGGGGGGGGGGT) show a composition bias toward gly residues. In terms of domain architecture, RRM spans 33 to 113 (EVIQVTNVSP…ALIVVPYAEG (81 aa)). Residue Lys-197 forms a Glycyl lysine isopeptide (Lys-Gly) (interchain with G-Cter in SUMO2) linkage. A Phosphoserine modification is found at Ser-207. Lys-211 participates in a covalent cross-link: Glycyl lysine isopeptide (Lys-Gly) (interchain with G-Cter in SUMO2). Ser-212 is subject to Phosphoserine. Residues 233 to 484 (ISAAIEPDKK…HHEEDMDMSD (252 aa)) are disordered. Residues 244–308 (EKRRHSRSRS…ERGRRSRSTS (65 aa)) are compositionally biased toward basic residues. Tandem repeats lie at residues 247–255 (RHSRSRSRS), 258–265 (RRTPSSSR), 267–274 (RRSRSRSR), 275–282 (RRSHSKSR), 285–292 (RRSKSPRR), 293–300 (RRSHSRER), 302–309 (RRSRSTSK), 321–328 (KRSKTPPK), 334–341 (RRSRSASR), and 346–353 (RRSRSGTR). The segment at 247–353 (RHSRSRSRSR…RRRRSRSGTR (107 aa)) is 10 X 8 AA approximate repeats of R-R-S-R-S-R-S-R. A compositionally biased stretch (basic and acidic residues) spans 309-320 (KTRDKKKEDKEK). Residue Ser-323 is modified to Phosphoserine. Residue Thr-325 is modified to Phosphothreonine. Basic residues predominate over residues 334-379 (RRSRSASRERRRRRSRSGTRSPKKPRSPKRKLSRSPSPRRHKKEKK). Composition is skewed to basic and acidic residues over residues 380–395 (KDKD…ERST), 402–424 (KDKE…VTRD), and 433–478 (DSEK…HHEE). A phosphoserine mark is found at Ser-414 and Ser-434. Residue Thr-447 is modified to Phosphothreonine. A phosphoserine mark is found at Ser-449, Ser-456, Ser-464, and Ser-483.

Belongs to the splicing factor SR family. Interacts with PUF60.

It is found in the nucleus. May function in pre-mRNA splicing. The sequence is that of Serine/arginine-rich splicing factor 11 (SRSF11) from Homo sapiens (Human).